We begin with the raw amino-acid sequence, 681 residues long: DNA ligase (681 aa).

NAD(+) is bound by residues Asp45 to Asp49, Ser94 to Leu95, and Glu120. Lys122 acts as the N6-AMP-lysine intermediate in catalysis. NAD(+)-binding residues include Arg143, Glu177, Lys289, and Lys313. Zn(2+) contacts are provided by Cys403, Cys406, Cys421, and Cys426. The BRCT domain occupies Ala593–Ile681.

This sequence belongs to the NAD-dependent DNA ligase family. LigA subfamily. Requires Mg(2+) as cofactor. Mn(2+) is required as a cofactor.

The enzyme catalyses NAD(+) + (deoxyribonucleotide)n-3'-hydroxyl + 5'-phospho-(deoxyribonucleotide)m = (deoxyribonucleotide)n+m + AMP + beta-nicotinamide D-nucleotide.. Functionally, DNA ligase that catalyzes the formation of phosphodiester linkages between 5'-phosphoryl and 3'-hydroxyl groups in double-stranded DNA using NAD as a coenzyme and as the energy source for the reaction. It is essential for DNA replication and repair of damaged DNA. This is DNA ligase from Leptospira interrogans serogroup Icterohaemorrhagiae serovar copenhageni (strain Fiocruz L1-130).